The primary structure comprises 231 residues: Flagellar L-ring protein (231 aa).

The signal sequence occupies residues 1-18; that stretch reads MSRLLIVVSLSSAFALAG. Cys-19 carries the N-palmitoyl cysteine lipid modification. Cys-19 is lipidated: S-diacylglycerol cysteine.

The protein belongs to the FlgH family. In terms of assembly, the basal body constitutes a major portion of the flagellar organelle and consists of four rings (L,P,S, and M) mounted on a central rod.

The protein resides in the cell outer membrane. The protein localises to the bacterial flagellum basal body. Functionally, assembles around the rod to form the L-ring and probably protects the motor/basal body from shearing forces during rotation. The sequence is that of Flagellar L-ring protein from Stutzerimonas stutzeri (strain A1501) (Pseudomonas stutzeri).